A 214-amino-acid chain; its full sequence is Thymidylate kinase (214 aa).

An ATP-binding site is contributed by Gly-10–Ser-17.

The protein belongs to the thymidylate kinase family.

It catalyses the reaction dTMP + ATP = dTDP + ADP. Its function is as follows. Phosphorylation of dTMP to form dTDP in both de novo and salvage pathways of dTTP synthesis. In Brucella abortus (strain S19), this protein is Thymidylate kinase.